The sequence spans 551 residues: Arginine--tRNA ligase (551 aa).

Residues 123–133 (ANPTGPLTIGR) carry the 'HIGH' region motif.

Belongs to the class-I aminoacyl-tRNA synthetase family. In terms of assembly, monomer.

The protein localises to the cytoplasm. It catalyses the reaction tRNA(Arg) + L-arginine + ATP = L-arginyl-tRNA(Arg) + AMP + diphosphate. The polypeptide is Arginine--tRNA ligase (Prosthecochloris aestuarii (strain DSM 271 / SK 413)).